The sequence spans 434 residues: Glutamate-1-semialdehyde 2,1-aminomutase 1 (434 aa).

At Lys270 the chain carries N6-(pyridoxal phosphate)lysine.

The protein belongs to the class-III pyridoxal-phosphate-dependent aminotransferase family. HemL subfamily. In terms of assembly, homodimer. Pyridoxal 5'-phosphate is required as a cofactor.

The protein resides in the cytoplasm. The catalysed reaction is (S)-4-amino-5-oxopentanoate = 5-aminolevulinate. It participates in porphyrin-containing compound metabolism; protoporphyrin-IX biosynthesis; 5-aminolevulinate from L-glutamyl-tRNA(Glu): step 2/2. This is Glutamate-1-semialdehyde 2,1-aminomutase 1 from Bacillus thuringiensis subsp. konkukian (strain 97-27).